Here is a 349-residue protein sequence, read N- to C-terminus: AdoMet-dependent heme synthase (349 aa).

The region spanning 5–214 (TNAPRLIAWE…LHWFYEMQKE (210 aa)) is the Radical SAM core domain. The [4Fe-4S] cluster site is built by C19, C23, and C26.

This sequence belongs to the radical SAM superfamily. It depends on [4Fe-4S] cluster as a cofactor.

The enzyme catalyses Fe-coproporphyrin III + 2 S-adenosyl-L-methionine = heme b + 2 5'-deoxyadenosine + 2 L-methionine + 2 CO2. It functions in the pathway porphyrin-containing compound metabolism; protoheme biosynthesis. In terms of biological role, involved in siroheme-dependent heme b biosynthesis. Catalyzes the conversion of Fe-coproporphyrin III into heme by the oxidative decarboxylation of two propionate side chains. The chain is AdoMet-dependent heme synthase from Methanosarcina barkeri (strain Fusaro / DSM 804).